A 432-amino-acid chain; its full sequence is Adenylosuccinate synthetase (432 aa).

Residues 13–19 (GDEGKGK) and 41–43 (GHT) each bind GTP. The active-site Proton acceptor is the Asp-14. Mg(2+)-binding residues include Asp-14 and Gly-41. IMP-binding positions include 14–17 (DEGK), 39–42 (NAGH), Thr-130, Arg-144, Gln-225, Thr-240, and Arg-304. His-42 serves as the catalytic Proton donor. 300–306 (ATTGRRR) contributes to the substrate binding site. Residues Arg-306, 332–334 (KLD), and 415–417 (STG) each bind GTP.

This sequence belongs to the adenylosuccinate synthetase family. As to quaternary structure, homodimer. It depends on Mg(2+) as a cofactor.

The protein resides in the cytoplasm. The enzyme catalyses IMP + L-aspartate + GTP = N(6)-(1,2-dicarboxyethyl)-AMP + GDP + phosphate + 2 H(+). It functions in the pathway purine metabolism; AMP biosynthesis via de novo pathway; AMP from IMP: step 1/2. Functionally, plays an important role in the de novo pathway of purine nucleotide biosynthesis. Catalyzes the first committed step in the biosynthesis of AMP from IMP. In Shigella flexneri serotype 5b (strain 8401), this protein is Adenylosuccinate synthetase.